The sequence spans 669 residues: Translation factor GUF1, mitochondrial (669 aa).

Residues 1 to 49 constitute a mitochondrion transit peptide; it reads MWTLVGRGWGCARALAPRATGAALLVAPGPRSAPTLGAAPESWATDRLY. The 182-residue stretch at 66-247 folds into the tr-type G domain; the sequence is ENIRNFSIVA…AIIERIPPPK (182 aa). Residues 75-82, 140-144, and 194-197 each bind GTP; these read AHVDHGKS, DTPGH, and NKID.

This sequence belongs to the TRAFAC class translation factor GTPase superfamily. Classic translation factor GTPase family. LepA subfamily.

It localises to the mitochondrion inner membrane. The enzyme catalyses GTP + H2O = GDP + phosphate + H(+). Promotes mitochondrial protein synthesis. May act as a fidelity factor of the translation reaction, by catalyzing a one-codon backward translocation of tRNAs on improperly translocated ribosomes. Binds to mitochondrial ribosomes in a GTP-dependent manner. In Homo sapiens (Human), this protein is Translation factor GUF1, mitochondrial.